We begin with the raw amino-acid sequence, 644 residues long: MSLIECKNINRYFGSGENRVHILKDISLSIEKGDFVAIIGQSGSGKSTLMNILGCLDTAGSGSYRIDGIETAKMQPDELAALRRERFGFIFQRYNLLSSLTARDNVALPAVYMGAGGKERSARADKLLQDLGLASKEGNKPGELSGGQQQRVSIARALMNGGEIIFADEPTGALDTASGKNVMEIIRRLHEAGHTVIMVTHDPDIAANANRVIEIRDGEIISDTSKNPEIPASNVGRIREKASWSFYYDQFVEAFRMSVQAVLAHKMRSLLTMLGIIIGIASVVSVVALGNGSQKKILEDISSIGTNTISIFPGRGFGDRRSGRIKTLTIDDAKIIAKQSYVASATPMTSSGGTLTYRNTDLTASLYGVGEQYFDVRGLKLETGRLFDENDVKEDAQVVVIDQNVKDKLFADSDPLGKTILFRKRPLTVIGVMKKDENAFGNSDVLMLWSPYTTVMHQITGESHTNSITVKIKDNANTQVAEKGLTDLLKARHGTEDFFMNNSDSIRQIVESTTGTMKLLISSIALISLVVGGIGVMNIMLVSVTERTKEIGIRMAIGARRGNILQQFLIEAVLICVIGGLVGVGLSAAVSLVFNHFVTDFPMDISAMSVIGAVACSTGIGIAFGFMPANKAAKLNPIDALAQD.

In terms of domain architecture, ABC transporter spans 4-242 (IECKNINRYF…SNVGRIREKA (239 aa)). Position 40–47 (40–47 (GQSGSGKS)) interacts with ATP. Transmembrane regions (helical) follow at residues 270-290 (LLTM…VALG), 524-544 (IALI…LVSV), 574-594 (LICV…SLVF), and 607-627 (AMSV…FGFM).

It belongs to the ABC transporter superfamily. Macrolide exporter (TC 3.A.1.122) family. As to quaternary structure, homodimer.

The protein resides in the cell inner membrane. Its function is as follows. Non-canonical ABC transporter that contains transmembrane domains (TMD), which form a pore in the inner membrane, and an ATP-binding domain (NBD), which is responsible for energy generation. Confers resistance against macrolides. This chain is Macrolide export ATP-binding/permease protein MacB, found in Neisseria meningitidis serogroup B (strain ATCC BAA-335 / MC58).